The chain runs to 169 residues: ATP synthase subunit b (169 aa).

The helical transmembrane segment at 12-32 (PSVGLIFWKTVAFLIFLYILY) threads the bilayer. The segment at 69–107 (AENEEARREAEQKAQQILREARDSAEELREEEKAKTRRE) is disordered. A compositionally biased stretch (basic and acidic residues) spans 87 to 107 (REARDSAEELREEEKAKTRRE).

Belongs to the ATPase B chain family. F-type ATPases have 2 components, F(1) - the catalytic core - and F(0) - the membrane proton channel. F(1) has five subunits: alpha(3), beta(3), gamma(1), delta(1), epsilon(1). F(0) has three main subunits: a(1), b(2) and c(10-14). The alpha and beta chains form an alternating ring which encloses part of the gamma chain. F(1) is attached to F(0) by a central stalk formed by the gamma and epsilon chains, while a peripheral stalk is formed by the delta and b chains.

The protein resides in the cell inner membrane. Functionally, f(1)F(0) ATP synthase produces ATP from ADP in the presence of a proton or sodium gradient. F-type ATPases consist of two structural domains, F(1) containing the extramembraneous catalytic core and F(0) containing the membrane proton channel, linked together by a central stalk and a peripheral stalk. During catalysis, ATP synthesis in the catalytic domain of F(1) is coupled via a rotary mechanism of the central stalk subunits to proton translocation. Its function is as follows. Component of the F(0) channel, it forms part of the peripheral stalk, linking F(1) to F(0). The polypeptide is ATP synthase subunit b (Salinibacter ruber (strain DSM 13855 / M31)).